Consider the following 126-residue polypeptide: Gas vesicle protein J (126 aa).

The protein belongs to the gas vesicle GvpA family. In terms of assembly, interacts with GvpA.

The protein localises to the gas vesicle. In terms of biological role, a minor component of the gas vesicle, might be involved in nucleating gas vesicle formation. Gas vesicles (GV) are hollow, gas filled proteinaceous nanostructures. During planktonic growth they allow positioning of the organism at a favorable depth for light or nutrient acquisition. This chain is Gas vesicle protein J, found in Pseudanabaena galeata (strain PCC 6901).